Consider the following 201-residue polypeptide: Protein lin-7 homolog B (201 aa).

Residues 1 to 13 carry the Kinase interacting site motif; the sequence is MAALVEPLGLERE. The L27 domain maps to 10–65; sequence LEREVSRAVELLERLQRSGELPPQKLQALQRVLQSRFCSAIREVYEQLYDTLDITG. The region spanning 93 to 175 is the PDZ domain; the sequence is VVELPKTDEG…SVKLVVRYTP (83 aa).

This sequence belongs to the lin-7 family. As to quaternary structure, forms a complex with CASK and CASKIN1. Component of the brain-specific heterotrimeric complex (LIN-10-LIN-2-LIN-7 complex) composed of at least APBA1, CASK, and LIN7, which associates with the motor protein KIF17 to transport vesicles along microtubules. Forms a heterotrimeric complex composed of MMP5, LIN7B and PATJ; the N-terminal L27 domain of PALS1 interacts with the L27 domain of PATJ and the C-terminal L27 domain of PALS1 interacts with the L27 domain of LIN7B. Forms a heterotrimeric complex with DLG1 and CASK via their L27 domains. Interacts with DLG4 and GRIN2B as well as CDH1 and CTNNB1, the channels KCNJ12/Kir2.2, KCNJ4/Kir2.3 and probably KCNJ2/Kir2.1 and SLC6A12/BGT-1 via its PDZ domain. The association of LIN7A with cadherin and beta-catenin is calcium-dependent, occurs at synaptic junctions and requires the actin cytoskeleton. Interacts with EGFR, ERBB2, ERBB3 and ERBB4 with both PDZ and KID domains. Interacts with ASIC3. Interacts with TOPK. Interacts with RTKN. Associates with KIF17 via APBA1. Interacts with APBA1. Interacts with MPP7. Interacts with DLG2. Interacts with DLG3.

Its subcellular location is the cell membrane. It localises to the basolateral cell membrane. It is found in the cell junction. The protein resides in the postsynaptic density membrane. The protein localises to the tight junction. Its function is as follows. Plays a role in establishing and maintaining the asymmetric distribution of channels and receptors at the plasma membrane of polarized cells. Forms membrane-associated multiprotein complexes that may regulate delivery and recycling of proteins to the correct membrane domains. The tripartite complex composed of LIN7 (LIN7A, LIN7B or LIN7C), CASK and APBA1 associates with the motor protein KIF17 to transport vesicles containing N-methyl-D-aspartate (NMDA) receptor subunit NR2B along microtubules. This complex may have the potential to couple synaptic vesicle exocytosis to cell adhesion in brain. Ensures the proper localization of GRIN2B (subunit 2B of the NMDA receptor) to neuronal postsynaptic density and may function in localizing synaptic vesicles at synapses where it is recruited by beta-catenin and cadherin. Required to localize Kir2 channels, GABA transporter (SLC6A12) and EGFR/ERBB1, ERBB2, ERBB3 and ERBB4 to the basolateral membrane of epithelial cells. May increase the amplitude of ASIC3 acid-evoked currents by stabilizing the channel at the cell surface. This chain is Protein lin-7 homolog B (LIN7B), found in Bos taurus (Bovine).